A 472-amino-acid polypeptide reads, in one-letter code: Deoxyribodipyrimidine photo-lyase (472 aa).

In terms of domain architecture, Photolyase/cryptochrome alpha/beta spans 2-134 (TTHLVWFRQD…VCEGFDDSVI (133 aa)). Residues Asn-109 and Glu-110 each contribute to the (6R)-5,10-methylene-5,6,7,8-tetrahydrofolate site. Tyr-223 contacts FAD. Arg-227 serves as a coordination point for DNA. FAD contacts are provided by residues 235–239 (TSRLS), Trp-272, and 275–282 (ELIWREFY). Interaction with DNA stretches follow at residues 275–282 (ELIWREFY) and 342–343 (NR). Residue 373–375 (DGD) coordinates FAD. Residue Gln-405 participates in DNA binding.

Belongs to the DNA photolyase class-1 family. In terms of assembly, monomer. The cofactor is FAD. (6R)-5,10-methylene-5,6,7,8-tetrahydrofolate serves as cofactor.

It carries out the reaction cyclobutadipyrimidine (in DNA) = 2 pyrimidine residues (in DNA).. Functionally, involved in repair of UV radiation-induced DNA damage. Catalyzes the light-dependent monomerization (300-600 nm) of cyclobutyl pyrimidine dimers (in cis-syn configuration), which are formed between adjacent bases on the same DNA strand upon exposure to ultraviolet radiation. This Escherichia coli (strain K12) protein is Deoxyribodipyrimidine photo-lyase (phrB).